A 467-amino-acid chain; its full sequence is tRNA modification GTPase MnmE (467 aa).

Residues Arg25, Glu87, and Lys130 each coordinate (6S)-5-formyl-5,6,7,8-tetrahydrofolate. Positions 226–389 (GLSVVLAGQP…LRGELLRIAG (164 aa)) constitute a TrmE-type G domain. Residue Asn236 coordinates K(+). GTP contacts are provided by residues 236–241 (NVGKSS), 255–261 (TPIAGTT), and 280–283 (DTAG). Position 240 (Ser240) interacts with Mg(2+). Residues Thr255, Ile257, and Thr260 each coordinate K(+). Thr261 provides a ligand contact to Mg(2+). A (6S)-5-formyl-5,6,7,8-tetrahydrofolate-binding site is contributed by Lys467.

Belongs to the TRAFAC class TrmE-Era-EngA-EngB-Septin-like GTPase superfamily. TrmE GTPase family. In terms of assembly, homodimer. Heterotetramer of two MnmE and two MnmG subunits. It depends on K(+) as a cofactor.

It is found in the cytoplasm. In terms of biological role, exhibits a very high intrinsic GTPase hydrolysis rate. Involved in the addition of a carboxymethylaminomethyl (cmnm) group at the wobble position (U34) of certain tRNAs, forming tRNA-cmnm(5)s(2)U34. This is tRNA modification GTPase MnmE from Burkholderia mallei (strain NCTC 10247).